Reading from the N-terminus, the 39-residue chain is Photosystem II reaction center protein J (39 aa).

The chain crosses the membrane as a helical span at residues 7 to 27; it reads IPLWLVGLVGGLAVITMLSLF.

Belongs to the PsbJ family. In terms of assembly, PSII is composed of 1 copy each of membrane proteins PsbA, PsbB, PsbC, PsbD, PsbE, PsbF, PsbH, PsbI, PsbJ, PsbK, PsbL, PsbM, PsbT, PsbX, PsbY, PsbZ, Psb30/Ycf12, at least 3 peripheral proteins of the oxygen-evolving complex and a large number of cofactors. It forms dimeric complexes.

The protein localises to the plastid. It is found in the chloroplast thylakoid membrane. Functionally, one of the components of the core complex of photosystem II (PSII). PSII is a light-driven water:plastoquinone oxidoreductase that uses light energy to abstract electrons from H(2)O, generating O(2) and a proton gradient subsequently used for ATP formation. It consists of a core antenna complex that captures photons, and an electron transfer chain that converts photonic excitation into a charge separation. The protein is Photosystem II reaction center protein J of Trieres chinensis (Marine centric diatom).